We begin with the raw amino-acid sequence, 369 residues long: Protein V (369 aa).

Disordered regions lie at residues 1–24 and 38–320; these read MDQD…GRES and SEPT…GHRR. A compositionally biased stretch (basic and acidic residues) spans 7–20; the sequence is ISKEDSEVEREASG. Residues 50 to 61 are compositionally biased toward polar residues; the sequence is LHNTINTLQRPG. 2 stretches are compositionally biased toward basic and acidic residues: residues 99 to 110 and 150 to 168; these read AEAHARNVDKQN and GAED…RGED. Phosphoserine; by host occurs at positions 249, 257, and 260. Residues histidine 318, cysteine 337, cysteine 341, cysteine 353, cysteine 355, cysteine 358, cysteine 362, and cysteine 365 each contribute to the Zn(2+) site.

It belongs to the paramyxoviruses V protein family. Interacts with host IFIH1/MDA5 and DHX58/LGP2. Interacts with host IRF3. Interacts with host RIGI regulatory protein (via CARDs domain) and host TRIM25 (via SPRY domain); these interactions prevent TRIM25-mediated ubiquitination of RIG-I and disrupts downstream RIG-I signaling.

The protein resides in the host cytoplasm. Functionally, plays an essential role in the inhibition of host immune response. Prevents the establishment of cellular antiviral state by blocking interferon-alpha/beta (IFN-alpha/beta) production and signaling pathway. Interacts with host IFIH1/MDA5 and DHX58/LGP2 to inhibit the transduction pathway involved in the activation of IFN-beta promoter, thus protecting the virus against cell antiviral state. Also interacts with and inhibits host IRF3. Blocks the type I interferon signaling pathway by disrupting the RIG-I signaling pathway. This chain is Protein V (P/V/C), found in Sendai virus (strain Hamamatsu) (SeV).